The sequence spans 628 residues: DNA mismatch repair protein MutL (628 aa).

The disordered stretch occupies residues 332–416; sequence PTSAMPAPGN…ASTAPPLSEE (85 aa). The segment covering 375 to 396 has biased composition (polar residues); the sequence is EGSSRSDVPYPSASQVTETTDS.

This sequence belongs to the DNA mismatch repair MutL/HexB family.

This protein is involved in the repair of mismatches in DNA. It is required for dam-dependent methyl-directed DNA mismatch repair. May act as a 'molecular matchmaker', a protein that promotes the formation of a stable complex between two or more DNA-binding proteins in an ATP-dependent manner without itself being part of a final effector complex. In Syntrophotalea carbinolica (strain DSM 2380 / NBRC 103641 / GraBd1) (Pelobacter carbinolicus), this protein is DNA mismatch repair protein MutL.